The sequence spans 291 residues: Presqualene diphosphate synthase (291 aa).

The tract at residues 1–23 is disordered; the sequence is MTSAMKKIQPEAFSEKSSDSQAS.

The protein belongs to the phytoene/squalene synthase family. HpnD subfamily.

The enzyme catalyses 2 (2E,6E)-farnesyl diphosphate = presqualene diphosphate + diphosphate. Its pathway is secondary metabolite biosynthesis; hopanoid biosynthesis. Functionally, involved in the biosynthesis of the hopanoid precursor squalene (SQ) from farnesyl diphosphate (FPP). Catalyzes the first step, the formation of presqualene diphosphate (PSPP) from two molecules of FPP. This chain is Presqualene diphosphate synthase, found in Zymomonas mobilis subsp. mobilis (strain ATCC 31821 / ZM4 / CP4).